We begin with the raw amino-acid sequence, 180 residues long: Cell division protein SepF (180 aa).

The interval 14–81 is disordered; the sequence is NSEDDEEFDN…SKITPISKSS (68 aa). The segment covering 15 to 35 has biased composition (acidic residues); the sequence is SEDDEEFDNEDYYLDDEEEEE. The segment covering 57-68 has biased composition (basic and acidic residues); that stretch reads TRRDTTPKEKPV. Positions 69 to 79 are enriched in low complexity; the sequence is KTTSKITPISK.

It belongs to the SepF family. In terms of assembly, homodimer. Interacts with FtsZ.

The protein resides in the cytoplasm. Its function is as follows. Cell division protein that is part of the divisome complex and is recruited early to the Z-ring. Probably stimulates Z-ring formation, perhaps through the cross-linking of FtsZ protofilaments. Its function overlaps with FtsA. This chain is Cell division protein SepF, found in Agathobacter rectalis (strain ATCC 33656 / DSM 3377 / JCM 17463 / KCTC 5835 / VPI 0990) (Eubacterium rectale).